The sequence spans 451 residues: Phosphoglucosamine mutase (451 aa).

Ser-101 serves as the catalytic Phosphoserine intermediate. Ser-101, Asp-240, Asp-242, and Asp-244 together coordinate Mg(2+). Ser-101 is modified (phosphoserine).

This sequence belongs to the phosphohexose mutase family. Mg(2+) serves as cofactor. Post-translationally, activated by phosphorylation.

The enzyme catalyses alpha-D-glucosamine 1-phosphate = D-glucosamine 6-phosphate. Catalyzes the conversion of glucosamine-6-phosphate to glucosamine-1-phosphate. In Alkalilimnicola ehrlichii (strain ATCC BAA-1101 / DSM 17681 / MLHE-1), this protein is Phosphoglucosamine mutase.